Consider the following 126-residue polypeptide: Holo-[acyl-carrier-protein] synthase (126 aa).

2 residues coordinate Mg(2+): Asp-9 and Glu-58.

The protein belongs to the P-Pant transferase superfamily. AcpS family. The cofactor is Mg(2+).

It localises to the cytoplasm. The catalysed reaction is apo-[ACP] + CoA = holo-[ACP] + adenosine 3',5'-bisphosphate + H(+). In terms of biological role, transfers the 4'-phosphopantetheine moiety from coenzyme A to a Ser of acyl-carrier-protein. This Aliivibrio salmonicida (strain LFI1238) (Vibrio salmonicida (strain LFI1238)) protein is Holo-[acyl-carrier-protein] synthase.